The following is a 377-amino-acid chain: MDLDGMRPTWAEVDLNAVRANIRALKRISKAPRLMAVVKANGYGHGAVPVATAAIEAGADWLGVASVEEGVTLRRHGISAPILVLGYVSPGQAEAVLTEGLRVALFDGELGQALNREGRRLGRWARVHLKVDTGMGRIGLQPAEVGRLGRELARLDHVEVEGVFTHLATADEPGNPYTRLQLERYEAALAELAAAGVRPAIRHAANSAGLMLHPEAHYDMVRSGIAVVGLPPAPGVAWPVKLAPALTWKTRVGLVKWLEAGHSISYGCTYTTARREQIATLPVGYADGYPRRLSNRAQVLIRGRRCPVVGVVTMDQMMVRVPDDLPVRVGDEVVLIGRQGGEEITATELAGLADTISYEIVCGISRRVPRFYGGETA.

Lys-39 functions as the Proton acceptor; specific for D-alanine in the catalytic mechanism. N6-(pyridoxal phosphate)lysine is present on Lys-39. Residue Arg-137 coordinates substrate. The active-site Proton acceptor; specific for L-alanine is the Tyr-266. Met-314 contributes to the substrate binding site.

The protein belongs to the alanine racemase family. The cofactor is pyridoxal 5'-phosphate.

It carries out the reaction L-alanine = D-alanine. It functions in the pathway amino-acid biosynthesis; D-alanine biosynthesis; D-alanine from L-alanine: step 1/1. Catalyzes the interconversion of L-alanine and D-alanine. May also act on other amino acids. The protein is Alanine racemase (alr) of Symbiobacterium thermophilum (strain DSM 24528 / JCM 14929 / IAM 14863 / T).